A 70-amino-acid polypeptide reads, in one-letter code: Large ribosomal subunit protein bL31 (70 aa).

Positions 16, 18, 37, and 40 each coordinate Zn(2+).

Belongs to the bacterial ribosomal protein bL31 family. Type A subfamily. As to quaternary structure, part of the 50S ribosomal subunit. It depends on Zn(2+) as a cofactor.

Functionally, binds the 23S rRNA. This is Large ribosomal subunit protein bL31 from Alteromonas mediterranea (strain DSM 17117 / CIP 110805 / LMG 28347 / Deep ecotype).